Reading from the N-terminus, the 171-residue chain is Early E1A protein (171 aa).

Residues 40–48 form an interaction with RB1 in competition with E2F1 region; that stretch reads PTLHDLFDV. The tract at residues 67–96 is disordered; that stretch reads DTDSSASTEGDSGFSPLSTPPVSPIPPHPT. The span at 84–96 shows a compositional bias: pro residues; that stretch reads STPPVSPIPPHPT. Positions 106–110 match the LXCXE motif, interaction with host RB1 motif; it reads LLCLE. Residues 145–163 fold into a zinc finger; sequence CLRCAFYQEQDDNALCGLC. Residues 166-171 carry the Nuclear localization signal motif; it reads KGPCRR.

The protein belongs to the adenoviridae E1A protein family. Interacts with host UBE2I; this interaction interferes with polySUMOylation. Interacts with host RB1; this interaction induces the aberrant dissociation of RB1-E2F1 complex thereby disrupting the activity of RB1 and activating E2F1-regulated genes. Interacts with host ATF7; the interaction enhances ATF7-mediated viral transactivation activity which requires the zinc binding domains of both proteins. Isoform early E1A 32 kDa protein and isoform early E1A 26 kDa protein interact (via N-terminus) with CUL1 and E3 ubiquitin ligase RBX1; these interactions inhibit RBX1-CUL1-dependent elongation reaction of ubiquitin chains and attenuate ubiquitination of SCF(FBXW7) target proteins. Interacts (via PXLXP motif) with host ZMYND11/BS69 (via MYND-type zinc finger); this interaction inhibits E1A mediated transactivation. Interacts with host EP300; this interaction stimulates the acetylation of RB1 by recruiting EP300 and RB1 into a multimeric-protein complex. Interacts with host CTBP1 and CTBP2; this interaction seems to potentiate viral replication. Interacts with host DCAF7. Interacts with host DYRK1A. Interacts with host KPNA4; this interaction allows E1A import into the host nucleus. Interacts with host EP400; this interaction stabilizes MYC. Interacts with host TBP protein; this interaction probably disrupts the TBP-TATA complex.

It is found in the host nucleus. Its function is as follows. Plays a role in viral genome replication by driving entry of quiescent cells into the cell cycle. Stimulation of progression from G1 to S phase allows the virus to efficiently use the cellular DNA replicating machinery to achieve viral genome replication. E1A protein has both transforming and trans-activating activities. Induces the disassembly of the E2F1 transcription factor from RB1 by direct competition for the same binding site on RB1, with subsequent transcriptional activation of E2F1-regulated S-phase genes and of the E2 region of the adenoviral genome. Release of E2F1 leads to the ARF-mediated inhibition of MDM2 and causes TP53/p53 to accumulate because it is not targeted for degradation by MDM2-mediated ubiquitination anymore. This increase in TP53, in turn, would arrest the cell proliferation and direct its death but this effect is counteracted by the viral protein E1B-55K. Inactivation of the ability of RB1 to arrest the cell cycle is critical for cellular transformation, uncontrolled cellular growth and proliferation induced by viral infection. Interaction with RBX1 and CUL1 inhibits ubiquitination of the proteins targeted by SCF(FBXW7) ubiquitin ligase complex, and may be linked to unregulated host cell proliferation. The tumorigenesis-restraining activity of E1A may be related to the disruption of the host CtBP-CtIP complex through the CtBP binding motif. This is Early E1A protein from Canis lupus familiaris (Dog).